Reading from the N-terminus, the 340-residue chain is MTNKNAYAQSGVDVEAGYEVVERIKKHVARTERAGVMGALGGFGGMFDLSKTGVKEPVLISGTDGVGTKLMLAIKYDKHDTIGQDCVAMCVNDIIAAGAEPLYFLDYVATGKNEPAKLEQVVAGVAEGCVQAGAALIGGETAEMPGMYGEDDYDLAGFAVGVAEKSQIIDGSKVVEGDVLLGLVSSGIHSNGYSLVRRVFADYTGEEVLPELEGKKLKEVLLEPTRIYVKAVLPLIKEELVNGIAHITGGGFIENVPRMFADDLAAEIDESKVPVLPIFKALEKYGQIKHEEMFEIFNMGVGLMLAVSPENVERVKELLDEAVYEIGRIVKKENESVIIK.

The protein belongs to the AIR synthase family.

It is found in the cytoplasm. The enzyme catalyses 2-formamido-N(1)-(5-O-phospho-beta-D-ribosyl)acetamidine + ATP = 5-amino-1-(5-phospho-beta-D-ribosyl)imidazole + ADP + phosphate + H(+). The protein operates within purine metabolism; IMP biosynthesis via de novo pathway; 5-amino-1-(5-phospho-D-ribosyl)imidazole from N(2)-formyl-N(1)-(5-phospho-D-ribosyl)glycinamide: step 2/2. The sequence is that of Phosphoribosylformylglycinamidine cyclo-ligase from Streptococcus pneumoniae serotype 2 (strain D39 / NCTC 7466).